The chain runs to 243 residues: Orotidine 5'-phosphate decarboxylase (243 aa).

Substrate-binding positions include Asp-16, Lys-38, 65–74, Thr-120, Arg-181, Gln-190, Gly-210, and Arg-211; that span reads DLKLHDIPNT. Residue Lys-67 is the Proton donor of the active site.

Belongs to the OMP decarboxylase family. Type 1 subfamily. In terms of assembly, homodimer.

The enzyme catalyses orotidine 5'-phosphate + H(+) = UMP + CO2. The protein operates within pyrimidine metabolism; UMP biosynthesis via de novo pathway; UMP from orotate: step 2/2. Catalyzes the decarboxylation of orotidine 5'-monophosphate (OMP) to uridine 5'-monophosphate (UMP). The sequence is that of Orotidine 5'-phosphate decarboxylase from Bradyrhizobium sp. (strain BTAi1 / ATCC BAA-1182).